The sequence spans 167 residues: Translationally-controlled tumor protein homolog (167 aa).

In terms of domain architecture, TCTP spans 1 to 167; that stretch reads MKLFTDIISN…WKDGLRETKI (167 aa).

The protein belongs to the TCTP family.

The protein localises to the cytoplasm. It localises to the cytoskeleton. In terms of biological role, involved in protein synthesis. Involved in microtubule stabilization. The chain is Translationally-controlled tumor protein homolog from Mycosarcoma maydis (Corn smut fungus).